The chain runs to 218 residues: tRNA (guanine-N(7)-)-methyltransferase (218 aa).

The disordered stretch occupies residues 1–26 (MRLKNKPWANELVEEHPESALDRPDP). Residues 13-26 (VEEHPESALDRPDP) show a composition bias toward basic and acidic residues. 4 residues coordinate S-adenosyl-L-methionine: E45, E70, D97, and D119. Residue D119 is part of the active site. K123 lines the substrate pocket. The interval 125-130 (RHEKRR) is interaction with RNA. Substrate is bound by residues D155 and 195-198 (TEYE).

Belongs to the class I-like SAM-binding methyltransferase superfamily. TrmB family.

It carries out the reaction guanosine(46) in tRNA + S-adenosyl-L-methionine = N(7)-methylguanosine(46) in tRNA + S-adenosyl-L-homocysteine. It functions in the pathway tRNA modification; N(7)-methylguanine-tRNA biosynthesis. In terms of biological role, catalyzes the formation of N(7)-methylguanine at position 46 (m7G46) in tRNA. The protein is tRNA (guanine-N(7)-)-methyltransferase of Lactobacillus delbrueckii subsp. bulgaricus (strain ATCC 11842 / DSM 20081 / BCRC 10696 / JCM 1002 / NBRC 13953 / NCIMB 11778 / NCTC 12712 / WDCM 00102 / Lb 14).